We begin with the raw amino-acid sequence, 886 residues long: Kinesin-like protein KIF18A (886 aa).

A Kinesin motor domain is found at 11–355 (RMKVVVRVRP…LKYANRAKEI (345 aa)). Lysine 24 is covalently cross-linked (Glycyl lysine isopeptide (Lys-Gly) (interchain with G-Cter in SUMO2)). 113–120 (GATGSGKT) is an ATP binding site. A coiled-coil region spans residues 370-404 (ISQYVKICNMQKAEILMLKEKLKAYEEQKALSDRN). Serine 674 carries the post-translational modification Phosphoserine. A Glycyl lysine isopeptide (Lys-Gly) (interchain with G-Cter in SUMO2) cross-link involves residue lysine 683. At serine 695 the chain carries Phosphoserine. The tract at residues 774-804 (EQEPLASSKSSVHRIESSSFSTKDSMPESAG) is disordered. Residue lysine 782 forms a Glycyl lysine isopeptide (Lys-Gly) (interchain with G-Cter in SUMO2) linkage. At serine 826 the chain carries Phosphoserine. Lysine 862 participates in a covalent cross-link: Glycyl lysine isopeptide (Lys-Gly) (interchain with G-Cter in SUMO2). The disordered stretch occupies residues 862 to 886 (KRNTNKTNSNMLRKFRRNTSKENVQ).

The protein belongs to the TRAFAC class myosin-kinesin ATPase superfamily. Kinesin family. Interacts with CENPE and ESR1. Glycosylated. In terms of processing, ubiquitinated.

It localises to the cell projection. The protein resides in the ruffle. The protein localises to the cytoplasm. It is found in the nucleus. Its subcellular location is the cytoskeleton. It localises to the microtubule organizing center. The protein resides in the centrosome. In terms of biological role, microtubule-depolymerizing kinesin which plays a role in chromosome congression by reducing the amplitude of preanaphase oscillations and slowing poleward movement during anaphase, thus suppressing chromosome movements. May stabilize the CENPE-BUB1B complex at the kinetochores during early mitosis and maintains CENPE levels at kinetochores during chromosome congression. This is Kinesin-like protein KIF18A (Kif18a) from Mus musculus (Mouse).